Here is a 409-residue protein sequence, read N- to C-terminus: Arginine deiminase (409 aa).

The active-site Amidino-cysteine intermediate is the Cys-399.

Belongs to the arginine deiminase family.

The protein localises to the cytoplasm. The catalysed reaction is L-arginine + H2O = L-citrulline + NH4(+). Its pathway is amino-acid degradation; L-arginine degradation via ADI pathway; carbamoyl phosphate from L-arginine: step 1/2. The protein is Arginine deiminase of Borrelia garinii subsp. bavariensis (strain ATCC BAA-2496 / DSM 23469 / PBi) (Borreliella bavariensis).